The following is a 225-amino-acid chain: Futalosine hydrolase (225 aa).

Belongs to the PNP/UDP phosphorylase family. Futalosine hydrolase subfamily. In terms of assembly, homotetramer.

It carries out the reaction futalosine + H2O = dehypoxanthine futalosine + hypoxanthine. The protein operates within quinol/quinone metabolism; menaquinone biosynthesis. With respect to regulation, no enhancing of inhibitory effects are observed with divalent metal ions. Slightly inhibited by hypoxanthine. In terms of biological role, catalyzes the hydrolysis of futalosine (FL) to dehypoxanthine futalosine (DHFL) and hypoxanthine, a step in the biosynthesis of menaquinone (MK, vitamin K2). Is highly specific to futalosine since it does not accept aminodeoxyfutalosine (AFL), or any structurally related nucleotides and nucleosides as substrate. This chain is Futalosine hydrolase, found in Thermus thermophilus (strain ATCC 27634 / DSM 579 / HB8).